The following is a 133-amino-acid chain: Small ribosomal subunit protein uS11 (133 aa).

The protein belongs to the universal ribosomal protein uS11 family. In terms of assembly, part of the 30S ribosomal subunit. Interacts with proteins S7 and S18. Binds to IF-3.

In terms of biological role, located on the platform of the 30S subunit, it bridges several disparate RNA helices of the 16S rRNA. Forms part of the Shine-Dalgarno cleft in the 70S ribosome. This chain is Small ribosomal subunit protein uS11, found in Cupriavidus metallidurans (strain ATCC 43123 / DSM 2839 / NBRC 102507 / CH34) (Ralstonia metallidurans).